The chain runs to 208 residues: Holliday junction resolvase RecU (208 aa).

Positions 1–28 (MNYPNGKPYSKNKPLDGRKSSPFSSNIE) are disordered. Threonine 87, aspartate 89, glutamate 102, and glutamine 121 together coordinate Mg(2+).

This sequence belongs to the RecU family. Requires Mg(2+) as cofactor.

The protein localises to the cytoplasm. The catalysed reaction is Endonucleolytic cleavage at a junction such as a reciprocal single-stranded crossover between two homologous DNA duplexes (Holliday junction).. In terms of biological role, endonuclease that resolves Holliday junction intermediates in genetic recombination. Cleaves mobile four-strand junctions by introducing symmetrical nicks in paired strands. Promotes annealing of linear ssDNA with homologous dsDNA. Required for DNA repair, homologous recombination and chromosome segregation. This chain is Holliday junction resolvase RecU, found in Staphylococcus epidermidis (strain ATCC 12228 / FDA PCI 1200).